The chain runs to 589 residues: Coiled-coil domain-containing protein 22 homolog (589 aa).

Coiled-coil stretches lie at residues Lys-287–Lys-426 and Cys-523–Gln-589. Residues Glu-568–Gln-589 form a disordered region. Over residues Gln-574 to Gln-589 the composition is skewed to basic and acidic residues.

Belongs to the CCDC22 family.

The protein is Coiled-coil domain-containing protein 22 homolog of Aedes aegypti (Yellowfever mosquito).